The chain runs to 184 residues: Large ribosomal subunit protein uL6 (184 aa).

It belongs to the universal ribosomal protein uL6 family. As to quaternary structure, part of the 50S ribosomal subunit.

This protein binds to the 23S rRNA, and is important in its secondary structure. It is located near the subunit interface in the base of the L7/L12 stalk, and near the tRNA binding site of the peptidyltransferase center. In Thermosipho africanus (strain TCF52B), this protein is Large ribosomal subunit protein uL6.